The chain runs to 343 residues: Heat-inducible transcription repressor HrcA (343 aa).

It belongs to the HrcA family.

Functionally, negative regulator of class I heat shock genes (grpE-dnaK-dnaJ and groELS operons). Prevents heat-shock induction of these operons. In Mycolicibacterium smegmatis (strain ATCC 700084 / mc(2)155) (Mycobacterium smegmatis), this protein is Heat-inducible transcription repressor HrcA.